The chain runs to 505 residues: Deoxyguanosinetriphosphate triphosphohydrolase (505 aa).

The HD domain maps to 66–273 (RLTHSMEVQQ…MEAADDISYC (208 aa)).

The protein belongs to the dGTPase family. Type 1 subfamily. As to quaternary structure, homotetramer. Mg(2+) serves as cofactor.

The catalysed reaction is dGTP + H2O = 2'-deoxyguanosine + triphosphate + H(+). Functionally, dGTPase preferentially hydrolyzes dGTP over the other canonical NTPs. The sequence is that of Deoxyguanosinetriphosphate triphosphohydrolase from Shigella flexneri.